Here is a 328-residue protein sequence, read N- to C-terminus: Beta-agarase C (328 aa).

Positions 1-17 (MNLTKMAVFAASLFCLA) are cleaved as a signal peptide. Residues 18 to 67 (CKNDIDTELEKKSIPESEIQKSEEKLPNEEELTPTDPDEETNKEETVTAN) constitute a propeptide that is removed on maturation. The segment covering 26 to 45 (LEKKSIPESEIQKSEEKLPN) has biased composition (basic and acidic residues). The disordered stretch occupies residues 26-61 (LEKKSIPESEIQKSEEKLPNEEELTPTDPDEETNKE). Residues 46-59 (EEELTPTDPDEETN) show a composition bias toward acidic residues. The region spanning 70–328 (YDFTGNTPPP…WIHTYQLVEE (259 aa)) is the GH16 domain. Substrate-binding positions include W110, 119 to 129 (KAENSGVSDGK), 133 to 135 (KAT), E188, E193, and R224. The Nucleophile role is filled by E188. Residue E193 is the Proton donor of the active site.

Belongs to the glycosyl hydrolase 16 family.

It is found in the secreted. The catalysed reaction is Hydrolysis of (1-&gt;4)-beta-D-galactosidic linkages in agarose, giving the tetramer as the predominant product.. Cleaves the beta-1,4-linkages between beta-D-galactose and alpha-L-3,6-anhydro-galactose residues in agarose. Cleaves agarose in a random manner with retention of the anomeric-bond configuration, producing beta-anomers that give rise progressively to alpha-anomers when mutarotation takes place. The protein is Beta-agarase C (agaC) of Zobellia galactanivorans (strain DSM 12802 / CCUG 47099 / CIP 106680 / NCIMB 13871 / Dsij).